We begin with the raw amino-acid sequence, 466 residues long: MPEHVGKIVQVIGPVVDIKFDAENLPDIYNSIEIDMGDNKKLIAEVEQHVGDDIVRTIAMEGTDGLKRGMEAVNTGKPISVPVGENVLGRLFNVLGQTIDEAGDMNADKYYPIHRPAPTFEEQSVQPEMFETGIKVIDLLAPYQKGGKIGLFGGAGVGKTVLIQELINNIAKEHGGLSVFTGVGERTREGNDLYYEMKDSGVINKTALVFGQMNEPPGARMRVALTGLTMAEYFRDKGQDVLLFIDNIFRFTQAGSEVSALLGRIPSAVGYQPTLANEMGALQERITSTKQGSITSVQAVYVPADDLTDPAPATTFTHLDATTVLSREISNLGIYPAVSPLESTSRILDPRIVGEEHYEVANKVKHILERYQELQDIIAILGVDELSDEDRLLVGRARRVQRFLSQAFSVAEQFTGMKGQFVPVKDTIRSFKEILDGKCDDLPEAAFLFAGTIEDVKEKAKKMMES.

153–160 provides a ligand contact to ATP; it reads GGAGVGKT.

Belongs to the ATPase alpha/beta chains family. F-type ATPases have 2 components, CF(1) - the catalytic core - and CF(0) - the membrane proton channel. CF(1) has five subunits: alpha(3), beta(3), gamma(1), delta(1), epsilon(1). CF(0) has three main subunits: a(1), b(2) and c(9-12). The alpha and beta chains form an alternating ring which encloses part of the gamma chain. CF(1) is attached to CF(0) by a central stalk formed by the gamma and epsilon chains, while a peripheral stalk is formed by the delta and b chains.

The protein localises to the cell membrane. The enzyme catalyses ATP + H2O + 4 H(+)(in) = ADP + phosphate + 5 H(+)(out). Functionally, produces ATP from ADP in the presence of a proton gradient across the membrane. The catalytic sites are hosted primarily by the beta subunits. In Clostridium acetobutylicum (strain ATCC 824 / DSM 792 / JCM 1419 / IAM 19013 / LMG 5710 / NBRC 13948 / NRRL B-527 / VKM B-1787 / 2291 / W), this protein is ATP synthase subunit beta.